Here is a 375-residue protein sequence, read N- to C-terminus: MELEQICILKPDDEEEMESPSPSKTEENLGVVPLSCAFTRQEHCVSETKEREESTRRLSSLIFLYLIVMSVQIVGGFKANSLAVMTDAAHLLSDVAGLCVSLLAIKVSSWEANPRNSFGFKRLEVLAAFLSVQLIWLVSGVIIHEAIQRLLSRSREVNGEIMFGISAFGFFMNLVMVLWLGHNHSHHHHDHHHHHHNHKHQHQHHHKEVVAEEEEEEMNPLKGEKSSSKEMNINIQGAYLHAMADMIQSLGVMIGGGIIWVKPKWVLVDLICTLVFSAFALAATLPILKNIFGILMERVPRDMDIEKLERGLKRIDGVKIVYDLHVWEITVGRIVLSCHILPEPGASPKEIITGVRNFCRKSYGIYHATVQVESE.

Topologically, residues 1–57 are cytoplasmic; that stretch reads MELEQICILKPDDEEEMESPSPSKTEENLGVVPLSCAFTRQEHCVSETKEREESTRR. The helical transmembrane segment at 58–78 threads the bilayer; that stretch reads LSSLIFLYLIVMSVQIVGGFK. Residues 79 to 84 lie on the Vacuolar side of the membrane; the sequence is ANSLAV. A helical transmembrane segment spans residues 85–105; the sequence is MTDAAHLLSDVAGLCVSLLAI. The Cytoplasmic segment spans residues 106–122; that stretch reads KVSSWEANPRNSFGFKR. Residues 123–143 traverse the membrane as a helical segment; that stretch reads LEVLAAFLSVQLIWLVSGVII. At 144 to 160 the chain is on the vacuolar side; sequence HEAIQRLLSRSREVNGE. The chain crosses the membrane as a helical span at residues 161 to 181; that stretch reads IMFGISAFGFFMNLVMVLWLG. Residues 182–206 form a required for zinc-binding region; the sequence is HNHSHHHHDHHHHHHNHKHQHQHHH. The Cytoplasmic segment spans residues 182 to 240; the sequence is HNHSHHHHDHHHHHHNHKHQHQHHHKEVVAEEEEEEMNPLKGEKSSSKEMNINIQGAYL. A helical membrane pass occupies residues 241–261; sequence HAMADMIQSLGVMIGGGIIWV. The Vacuolar portion of the chain corresponds to 262-264; sequence KPK. A helical membrane pass occupies residues 265–285; sequence WVLVDLICTLVFSAFALAATL. Over 286 to 375 the chain is Cytoplasmic; sequence PILKNIFGIL…YHATVQVESE (90 aa).

It belongs to the cation diffusion facilitator (CDF) transporter (TC 2.A.4) family. SLC30A subfamily.

The protein resides in the vacuole membrane. In terms of biological role, involved in sequestration of excess zinc in the cytoplasm into vacuoles to maintain zinc homeostasis. The chain is Metal tolerance protein B (MTPB) from Arabidopsis thaliana (Mouse-ear cress).